We begin with the raw amino-acid sequence, 490 residues long: C-type lectin domain family 14 member A (490 aa).

The first 21 residues, 1–21 (MRPAFALCLLWQALWPGPGGG), serve as a signal peptide directing secretion. At 22–397 (EHPTADRAGC…TPQAFDSSSA (376 aa)) the chain is on the extracellular side. Residues 33–173 (ASGACYSLHH…LRANGYLCKY (141 aa)) enclose the C-type lectin domain. Cysteine 143 and cysteine 162 form a disulfide bridge. Residue asparagine 189 is glycosylated (N-linked (GlcNAc...) asparagine). Residues 245 to 287 (PCPGRYLRAGKCAELPNCLDDLGGFACECATGFELGKDGRSCV) form the EGF-like domain. Residues 286 to 349 (CVTSGEGQPT…VTSIPEIPRW (64 aa)) form a disordered region. The span at 301–315 (VPTRRPPATATSPVP) shows a compositional bias: low complexity. Residue asparagine 381 is glycosylated (N-linked (GlcNAc...) asparagine). The chain crosses the membrane as a helical span at residues 398 to 418 (VVFIFVSTAVVVLVILTMTVL). Topologically, residues 419-490 (GLVKLCFHES…AESPLGSSDA (72 aa)) are cytoplasmic. A disordered region spans residues 428-461 (SPSSQPRKESMGPPGLESDPEPAALGSSSAHCTN).

It is found in the membrane. The protein is C-type lectin domain family 14 member A (CLEC14A) of Homo sapiens (Human).